The primary structure comprises 357 residues: Peptide chain release factor 1 (357 aa).

An N5-methylglutamine modification is found at Gln233. Residues 284 to 305 (RSASISADRKSQVGTGDRSERI) form a disordered region.

It belongs to the prokaryotic/mitochondrial release factor family. In terms of processing, methylated by PrmC. Methylation increases the termination efficiency of RF1.

The protein resides in the cytoplasm. Its function is as follows. Peptide chain release factor 1 directs the termination of translation in response to the peptide chain termination codons UAG and UAA. The protein is Peptide chain release factor 1 of Clostridium novyi (strain NT).